A 1164-amino-acid polypeptide reads, in one-letter code: DNA-directed RNA polymerase 132 kDa polypeptide (1164 aa).

It belongs to the RNA polymerase beta chain family. In terms of assembly, the DNA-dependent RNA polymerase used for intermediate and late genes expression consists of eight subunits (147) kDa, (133) kDa, (35) kDa, (30) kDa, (22) kDa, (19) kDa, (18) kDa and (7) kDa totalling more than 500 kDa in mass. The same holoenzyme, with the addition of the transcription-specificity factor RAP94, is used for early gene expression.

The protein localises to the virion. The catalysed reaction is RNA(n) + a ribonucleoside 5'-triphosphate = RNA(n+1) + diphosphate. In terms of biological role, part of the DNA-dependent RNA polymerase which catalyzes the transcription of viral DNA into RNA using the four ribonucleoside triphosphates as substrates. Responsible for the transcription of early, intermediate and late genes. DNA-dependent RNA polymerase associates with the early transcription factor (ETF), itself composed of D6 and A7, thereby allowing the early genes transcription. Late transcription, and probably also intermediate transcription, require newly synthesized RNA polymerase. This Bos taurus (Bovine) protein is DNA-directed RNA polymerase 132 kDa polypeptide (RPO132).